The sequence spans 216 residues: Holliday junction branch migration complex subunit RuvA (216 aa).

The segment at 1–64 is domain I; sequence MISFIKGVLI…EDAQQLYGFK (64 aa). Residues 65–143 are domain II; sequence SKVDKKVFQE…KMANEIYAQT (79 aa). The interval 144 to 163 is flexible linker; that stretch reads SGTTTTSQDSQAQQAPTSVV. Positions 164–216 are domain III; sequence LANSIFNESVDALLALGYKQKDAEKMARSAMGDATTAAEVIRKALQGSIKSKR.

It belongs to the RuvA family. As to quaternary structure, homotetramer. Forms an RuvA(8)-RuvB(12)-Holliday junction (HJ) complex. HJ DNA is sandwiched between 2 RuvA tetramers; dsDNA enters through RuvA and exits via RuvB. An RuvB hexamer assembles on each DNA strand where it exits the tetramer. Each RuvB hexamer is contacted by two RuvA subunits (via domain III) on 2 adjacent RuvB subunits; this complex drives branch migration. In the full resolvosome a probable DNA-RuvA(4)-RuvB(12)-RuvC(2) complex forms which resolves the HJ.

Its subcellular location is the cytoplasm. Functionally, the RuvA-RuvB-RuvC complex processes Holliday junction (HJ) DNA during genetic recombination and DNA repair, while the RuvA-RuvB complex plays an important role in the rescue of blocked DNA replication forks via replication fork reversal (RFR). RuvA specifically binds to HJ cruciform DNA, conferring on it an open structure. The RuvB hexamer acts as an ATP-dependent pump, pulling dsDNA into and through the RuvAB complex. HJ branch migration allows RuvC to scan DNA until it finds its consensus sequence, where it cleaves and resolves the cruciform DNA. The sequence is that of Holliday junction branch migration complex subunit RuvA from Francisella tularensis subsp. mediasiatica (strain FSC147).